A 498-amino-acid polypeptide reads, in one-letter code: Lysine--tRNA ligase (498 aa).

2 residues coordinate Mg(2+): E401 and E408.

This sequence belongs to the class-II aminoacyl-tRNA synthetase family. In terms of assembly, homodimer. It depends on Mg(2+) as a cofactor.

It localises to the cytoplasm. The enzyme catalyses tRNA(Lys) + L-lysine + ATP = L-lysyl-tRNA(Lys) + AMP + diphosphate. The polypeptide is Lysine--tRNA ligase (Dehalococcoides mccartyi (strain CBDB1)).